The chain runs to 488 residues: Poly(3-hydroxybutyrate) depolymerase (488 aa).

The N-terminal stretch at 1-27 is a signal peptide; the sequence is MVRRLWRRIAGWLAACVAILCAFPLHA. The active-site Charge relay system is serine 166. A Fibronectin type-III domain is found at 346 to 428; the sequence is APTGLAVTAT…AAVSATTKSA (83 aa).

This sequence belongs to the AB hydrolase superfamily. Lipase family.

The protein resides in the secreted. It carries out the reaction [(3R)-hydroxybutanoate](n) + H2O = [(3R)-hydroxybutanoate](n-2) + (3R)-hydroxybutanoate dimer + H(+). It catalyses the reaction [(3R)-hydroxybutanoate](n) + H2O = [(3R)-hydroxybutanoate](n-3) + (3R)-hydroxybutanoate trimer + H(+). The catalysed reaction is [(3R)-hydroxybutanoate](n) + H2O = [(3R)-hydroxybutanoate](n-1) + (R)-3-hydroxybutanoate + H(+). The enzyme catalyses [(3R)-hydroxybutanoate](n) + H2O = [(3R)-hydroxybutanoate](n-5) + (3R)-hydroxybutanoate pentamer + H(+). It carries out the reaction [(3R)-hydroxybutanoate](n) + H2O = [(3R)-hydroxybutanoate](n-4) + (3R)-hydroxybutanoate tetramer + H(+). Its function is as follows. This protein degrades water-insoluble and water-soluble PHB to monomeric D(-)-3-hydroxybutyrate. This Ralstonia pickettii (Burkholderia pickettii) protein is Poly(3-hydroxybutyrate) depolymerase.